Consider the following 1008-residue polypeptide: G protein-regulated inducer of neurite outgrowth 1 (1008 aa).

The interval 1-859 (MDTAEDPAWL…SPPSRRDAGL (859 aa)) is disordered. At Thr60 the chain carries Phosphothreonine. 2 positions are modified to phosphoserine: Ser64 and Ser75. The span at 117–127 (ISGTPEATTSG) shows a compositional bias: polar residues. 4 stretches are compositionally biased toward basic and acidic residues: residues 137–159 (TEPKSSDDRNPMFLEKMDFKSSK), 167–178 (GKEDPGSSRKAD), 230–269 (PRKEDPGSLRKVDPVSSDKVDPVFPRKEEPRYSGKEHPVS), and 279–291 (EKVDLVLSGKRDP). The residue at position 237 (Ser237) is a Phosphoserine. 2 stretches are compositionally biased toward polar residues: residues 326-336 (SGKNGPVSSGT) and 391-406 (HTDTTASAKTDLTSLK). Ser436 and Ser452 each carry phosphoserine. Residues 454–466 (GKEDPVSSRREDP) are compositionally biased toward basic and acidic residues. Polar residues predominate over residues 481–491 (PESSGKTNPVS). Residues 549–559 (GKEDPVSKGKA) are compositionally biased toward basic and acidic residues. At Ser615 the chain carries Phosphoserine. Positions 643-656 (PGQEGAAAPGEAGA) are enriched in low complexity. Residues 659–679 (LKKETPQASEKVDPGSCRKAE) show a composition bias toward basic and acidic residues. At Ser737 the chain carries Phosphoserine. Positions 742–752 (RGSEGRVEPKA) are enriched in basic and acidic residues. Residues 755 to 764 (VSSTEASSLG) show a composition bias toward polar residues. At Ser799 the chain carries Phosphoserine. Positions 838 to 847 (SAFSFQAAPR) are enriched in low complexity. At Thr877 the chain carries Phosphothreonine. 2 positions are modified to phosphoserine: Ser895 and Ser914. The segment at 899–1008 (AAVAPPEPAE…CCSRAGPTAE (110 aa)) is interaction with GNAO1. The tract at residues 943–986 (ERQIEEHGRQGAPAPPPAARAGPGRSGSVRTAPPDGAAKRPPGL) is disordered. Phosphoserine is present on Ser993. 2 S-palmitoyl cysteine lipidation sites follow: Cys999 and Cys1000.

In terms of assembly, interacts with activated forms of GNAI1, GNAO1 and GNAZ. Post-translationally, palmitoylation on Cys-999 and/or Cys-1000 is required for membrane targeting. In terms of tissue distribution, widely expressed in the central nervous system, with highest levels in spinal cord.

The protein resides in the cell membrane. Its subcellular location is the cell projection. It is found in the growth cone. May be involved in neurite outgrowth. In Homo sapiens (Human), this protein is G protein-regulated inducer of neurite outgrowth 1 (GPRIN1).